The sequence spans 618 residues: DNA mismatch repair protein MutL (618 aa).

The segment covering 367-378 has biased composition (low complexity); the sequence is EPTAAREPATPR. A disordered region spans residues 367–402; the sequence is EPTAAREPATPRYSGGASGGNGGRQTAGGWPHAQPG. The span at 382-392 shows a compositional bias: gly residues; that stretch reads GASGGNGGRQT.

It belongs to the DNA mismatch repair MutL/HexB family.

Its function is as follows. This protein is involved in the repair of mismatches in DNA. It is required for dam-dependent methyl-directed DNA mismatch repair. May act as a 'molecular matchmaker', a protein that promotes the formation of a stable complex between two or more DNA-binding proteins in an ATP-dependent manner without itself being part of a final effector complex. This chain is DNA mismatch repair protein MutL, found in Salmonella choleraesuis (strain SC-B67).